A 566-amino-acid polypeptide reads, in one-letter code: Malate synthase, glyoxysomal (566 aa).

The active-site Proton acceptor is the arginine 179. The active-site Proton donor is the aspartate 465. The Microbody targeting signal signature appears at 564-566; sequence SRL.

The protein belongs to the malate synthase family.

Its subcellular location is the glyoxysome. The enzyme catalyses glyoxylate + acetyl-CoA + H2O = (S)-malate + CoA + H(+). It functions in the pathway carbohydrate metabolism; glyoxylate cycle; (S)-malate from isocitrate: step 2/2. In Raphanus sativus (Radish), this protein is Malate synthase, glyoxysomal (MLS).